The sequence spans 140 residues: Sec-independent protein translocase protein TatB (140 aa).

A helical membrane pass occupies residues 2–22 (LPGIGFSELLLIGLAALIIIG). The segment at 90 to 140 (VNSAVMREHPVSPPPPATPPAPPAELPPEAAPHADSQNAPPEADPAKGDRT) is disordered. Residues 100–119 (VSPPPPATPPAPPAELPPEA) show a composition bias toward pro residues.

Belongs to the TatB family. As to quaternary structure, the Tat system comprises two distinct complexes: a TatABC complex, containing multiple copies of TatA, TatB and TatC subunits, and a separate TatA complex, containing only TatA subunits. Substrates initially bind to the TatABC complex, which probably triggers association of the separate TatA complex to form the active translocon.

Its subcellular location is the cell inner membrane. Its function is as follows. Part of the twin-arginine translocation (Tat) system that transports large folded proteins containing a characteristic twin-arginine motif in their signal peptide across membranes. Together with TatC, TatB is part of a receptor directly interacting with Tat signal peptides. TatB may form an oligomeric binding site that transiently accommodates folded Tat precursor proteins before their translocation. This chain is Sec-independent protein translocase protein TatB, found in Hyphomonas neptunium (strain ATCC 15444).